The sequence spans 271 residues: Neurexophilin-1 (271 aa).

Positions 1–21 (MQAACWYVLLLLQPTVYLVTC) are cleaved as a signal peptide. Residues 22 to 97 (ANLTNGGKSE…WDWLRNSTDL (76 aa)) form an II region. N-linked (GlcNAc...) asparagine glycosylation is found at asparagine 23, asparagine 68, asparagine 93, asparagine 146, asparagine 156, and asparagine 162. An III region spans residues 98 to 176 (QEPRPRAKRR…LVPPTKIVEF (79 aa)). The interval 177–185 (DLAQQTVID) is IV (linker domain). The segment at 186 to 271 (AKDSKSFNCR…HSDTPYFPSG (86 aa)) is v (Cys-rich).

It belongs to the neurexophilin family. In terms of processing, may be proteolytically processed at the boundary between the N-terminal non-conserved and the central conserved domain in neuron-like cells. Brain, only in a scattered subpopulation of neurons that probably represent inhibitory interneurons.

It is found in the secreted. Its function is as follows. May be signaling molecules that resemble neuropeptides. Ligand for alpha-neurexins. In Mus musculus (Mouse), this protein is Neurexophilin-1 (Nxph1).